A 1094-amino-acid polypeptide reads, in one-letter code: Transcriptional regulator CRZ1 (1094 aa).

Disordered regions lie at residues 1 to 29 (MADP…STSS), 44 to 81 (FNSD…LDMM), 93 to 428 (GRRQ…FPPS), and 477 to 519 (RAGA…RTLS). 2 stretches are compositionally biased toward basic and acidic residues: residues 60 to 78 (QARK…KRYL) and 94 to 103 (RRQESLRKES). The residue at position 103 (serine 103) is a Phosphoserine. The segment covering 148-159 (PNQPQQPSQQPP) has biased composition (low complexity). Composition is skewed to polar residues over residues 166–187 (SEQS…QSSG) and 201–217 (GTTS…QISP). 2 stretches are compositionally biased toward low complexity: residues 228 to 241 (QPPQ…QQQQ) and 252 to 262 (EQQQQYAQGEG). Positions 286–324 (VISNTSHPSQYPSRTSSPFPQQSQSNMVPASTVNQTRTE) are enriched in polar residues. Phosphoserine occurs at positions 288 and 329. The span at 325–342 (SFPASRSPSPFAPQQASQ) shows a compositional bias: low complexity. 2 stretches are compositionally biased toward polar residues: residues 343 to 379 (TEAS…FNKP) and 396 to 412 (IVTQ…LNQP). The span at 477–493 (RAGAARGAQRQGPQGQG) shows a compositional bias: low complexity. A compositionally biased stretch (polar residues) spans 507–519 (PSPQSHPLPRTLS). A phosphoserine mark is found at serine 508, serine 569, serine 765, and serine 810. The disordered stretch occupies residues 835-888 (ITGDDGSLLPPSNRGHAMSHSRHSSTSSIRSASPALSISSQGSSFSHHSPRMDM). A compositionally biased stretch (low complexity) spans 858 to 881 (SSTSSIRSASPALSISSQGSSFSH). The segment at 944 to 968 (FKCPVPGCGSTFTRHFNLKGHLRSH) adopts a C2H2-type 1 zinc-finger fold. The C2H2-type 2; degenerate zinc finger occupies 1007–1029 (FECEGCGKKFARLDALTRHHKSE). The segment at 1037–1094 (THPLPTNFDGSPMSESQYKTYKGIKSTPEGSGRRLSSTASGSGSGKRRSKKSETSEED) is disordered.

In terms of processing, phosphorylated. Dephosphorylated by calcineurin (CNA1) which promotes nuclear localization.

It is found in the cytoplasm. It localises to the cytosol. Its subcellular location is the nucleus. Functionally, DNA-binding transcriptional activator that interacts with calcineurin-dependent response element (CDRE) promoters. Activates expression of genes required to maintain cell wall integrity during stress. Activates expression of genes required for transepithelial migration through the host blood-brain barrier. Required for adaptation to host temperature during infection. The polypeptide is Transcriptional regulator CRZ1 (Cryptococcus neoformans var. grubii serotype A (strain H99 / ATCC 208821 / CBS 10515 / FGSC 9487) (Filobasidiella neoformans var. grubii)).